Reading from the N-terminus, the 148-residue chain is Lysozyme C (148 aa).

The signal sequence occupies residues 1–18 (MKAVIILGLVLLSVTVQG). Positions 19–148 (KIFERCELAR…VSQYVQGCGV (130 aa)) constitute a C-type lysozyme domain. 4 cysteine pairs are disulfide-bonded: Cys24-Cys146, Cys48-Cys134, Cys83-Cys99, and Cys95-Cys113. Active-site residues include Glu53 and Asp71.

The protein belongs to the glycosyl hydrolase 22 family. As to quaternary structure, monomer.

It localises to the secreted. It carries out the reaction Hydrolysis of (1-&gt;4)-beta-linkages between N-acetylmuramic acid and N-acetyl-D-glucosamine residues in a peptidoglycan and between N-acetyl-D-glucosamine residues in chitodextrins.. Lysozymes have primarily a bacteriolytic function; those in tissues and body fluids are associated with the monocyte-macrophage system and enhance the activity of immunoagents. The polypeptide is Lysozyme C (LYZ) (Macaca mulatta (Rhesus macaque)).